The sequence spans 2312 residues: Protein Ycf2 (2312 aa).

Residue 1630–1637 (GSIGTGRS) participates in ATP binding.

This sequence belongs to the Ycf2 family.

It localises to the plastid. The protein localises to the chloroplast stroma. Its function is as follows. Probable ATPase of unknown function. Its presence in a non-photosynthetic plant (Epifagus virginiana) and experiments in tobacco indicate that it has an essential function which is probably not related to photosynthesis. The chain is Protein Ycf2 from Manihot esculenta (Cassava).